We begin with the raw amino-acid sequence, 579 residues long: MTDQQSRPASPRRRSTQSIADRLALDALYEIAKTFAAAPDPVAEVPQIFNVLSSFLDLRHGVLALLAEPGEGAGVNPYVIAATAFQRSPEAPAADVLPDAVARIVFRSGVPFVSFDLVAEFGAEAVPKRLRDAGQTLIAVPLRDPERSHFVLGVLAAYRSHDHNRSGFSDADVRVLTMVASLLEQALRFRRRIARDRERALEDTRRMLQTVTEQRGPAAPVSLDGIVGSSPAIAEVVAQIKRVASTRMPVLLRGESGTGKELFARAVHAQSPRAKGPFIRVNCAALSETLLESELFGHEKGAFTGATALKKGRFELADGGTLFLDEIGEISPAFQSKLLRVLQEGEFERVGGAKTIKVDTRIVAATNRDLEDAVARGQFRADLYFRICVVPIVLPPLRNRKSDIKPLAQLFLDRFNKQNATNVKFAADAFDQICRCQFPGNVRELENCVNRAAALSDGAIVLAEELACRQGACLSAELFRLQDGTSPIGGLAVGRVITPTVRVSAPPPEPAPAPEPAPEAPPREEVPLRTKTAQLSREELLRALESAGWVQAKAARLLGMTPRQIAYALQKFEIELRKI.

Residues 40–187 (DPVAEVPQIF…MVASLLEQAL (148 aa)) enclose the GAF domain. The 229-residue stretch at 226–454 (IVGSSPAIAE…LENCVNRAAA (229 aa)) folds into the Sigma-54 factor interaction domain. ATP-binding positions include 254 to 261 (GESGTGKE) and 317 to 326 (ADGGTLFLDE). The inter-domain linker stretch occupies residues 464 to 536 (EELACRQGAC…PLRTKTAQLS (73 aa)). Residues C468 and C473 each contribute to the a divalent metal cation site. The tract at residues 502–529 (RVSAPPPEPAPAPEPAPEAPPREEVPLR) is disordered. 7 tandem repeats follow at residues 505–506 (AP), 507–508 (PP), 509–510 (EP), 511–512 (AP), 513–514 (AP), 515–516 (EP), and 517–518 (AP). Positions 505-518 (APPPEPAPAPEPAP) are 7 X 2 AA tandem repeats of X-P. A compositionally biased stretch (pro residues) spans 505–520 (APPPEPAPAPEPAPEA). The segment at 537-579 (REELLRALESAGWVQAKAARLLGMTPRQIAYALQKFEIELRKI) is C-terminal DNA-binding domain. The segment at residues 551–570 (QAKAARLLGMTPRQIAYALQ) is a DNA-binding region (H-T-H motif).

As to quaternary structure, interacts with sigma-54.

Its function is as follows. Required for activation of most nif operons, which are directly involved in nitrogen fixation. The protein is Nif-specific regulatory protein (nifA1) of Rhodobacter capsulatus (Rhodopseudomonas capsulata).